A 364-amino-acid chain; its full sequence is Chorismate synthase (364 aa).

The segment at 41-60 (MQHDLDRRRPGTSRYTTARR) is disordered. Positions 48 and 54 each coordinate NADP(+). Residues 125–127 (RSS), 238–239 (NA), Gly-278, 293–297 (KPTSS), and Arg-319 contribute to the FMN site.

The protein belongs to the chorismate synthase family. As to quaternary structure, homotetramer. Requires FMNH2 as cofactor.

It carries out the reaction 5-O-(1-carboxyvinyl)-3-phosphoshikimate = chorismate + phosphate. The protein operates within metabolic intermediate biosynthesis; chorismate biosynthesis; chorismate from D-erythrose 4-phosphate and phosphoenolpyruvate: step 7/7. In terms of biological role, catalyzes the anti-1,4-elimination of the C-3 phosphate and the C-6 proR hydrogen from 5-enolpyruvylshikimate-3-phosphate (EPSP) to yield chorismate, which is the branch point compound that serves as the starting substrate for the three terminal pathways of aromatic amino acid biosynthesis. This reaction introduces a second double bond into the aromatic ring system. The sequence is that of Chorismate synthase from Shewanella sp. (strain ANA-3).